The following is a 357-amino-acid chain: NADH-quinone oxidoreductase subunit H (357 aa).

8 helical membrane-spanning segments follow: residues leucine 26–tryptophan 46, alanine 92–isoleucine 112, leucine 127–alanine 147, methionine 164–serine 184, glycine 203–isoleucine 223, phenylalanine 259–leucine 279, valine 294–phenylalanine 314, and leucine 329–methionine 349.

It belongs to the complex I subunit 1 family. In terms of assembly, NDH-1 is composed of 14 different subunits. Subunits NuoA, H, J, K, L, M, N constitute the membrane sector of the complex.

It localises to the cell inner membrane. It carries out the reaction a quinone + NADH + 5 H(+)(in) = a quinol + NAD(+) + 4 H(+)(out). In terms of biological role, NDH-1 shuttles electrons from NADH, via FMN and iron-sulfur (Fe-S) centers, to quinones in the respiratory chain. The immediate electron acceptor for the enzyme in this species is believed to be ubiquinone. Couples the redox reaction to proton translocation (for every two electrons transferred, four hydrogen ions are translocated across the cytoplasmic membrane), and thus conserves the redox energy in a proton gradient. This subunit may bind ubiquinone. In Janthinobacterium sp. (strain Marseille) (Minibacterium massiliensis), this protein is NADH-quinone oxidoreductase subunit H.